Reading from the N-terminus, the 616-residue chain is Formin-binding protein 1 (616 aa).

Residues 1–79 (MSWGTELWDQ…CKAFLSTLNE (79 aa)) form a required for self-association and induction of membrane tubulation region. The F-BAR domain maps to 1–264 (MSWGTELWDQ…AAESIDQKND (264 aa)). The tract at residues 1-334 (MSWGTELWDQ…KKNKLMSLLT (334 aa)) is interaction with microtubules. Lys66 and Lys110 each carry N6-acetyllysine. A coiled-coil region spans residues 67-259 (YTACKAFLST…DGIVKAAESI (193 aa)). The interval 251-616 (GIVKAAESID…VYLDKNAKGS (366 aa)) is required for self-association and induction of membrane tubulation. Disordered stretches follow at residues 280 to 314 (GDIE…RFGG) and 332 to 366 (LLTS…KEPL). Residues Ser296 and Ser299 each carry the phosphoserine modification. Residues 337-346 (HQPPPPPPAS) show a composition bias toward pro residues. Residues Ser348 and Ser358 each carry the phosphoserine modification. Residues 398 to 490 (PEDFSNFPPE…VEGRLPARSE (93 aa)) are a coiled coil. Residues 399-551 (EDFSNFPPEQ…FDDEEPLPAI (153 aa)) are interaction with RND2. Residues 403 to 480 (NFPPEQRRKK…AQKFEAWLAE (78 aa)) form the REM-1 domain. The tract at residues 487 to 531 (ARSEQARRQSGLYDGQTHQTVTNCAQDRESPDGSYTEEQSQESEH) is disordered. Positions 494–616 (RQSGLYDGQT…VYLDKNAKGS (123 aa)) are interaction with PDE6G. At Ser496 the chain carries Phosphoserine. Position 499 is a phosphotyrosine (Tyr499). Positions 502-511 (QTHQTVTNCA) are enriched in polar residues. Residues 513 to 616 (DRESPDGSYT…VYLDKNAKGS (104 aa)) are required for interaction with TNKS. Ser520 is subject to Phosphoserine. The tract at residues 534-616 (LAPDFDDEFD…VYLDKNAKGS (83 aa)) is interaction with DNM1 and DNM3. In terms of domain architecture, SH3 spans 549 to 610 (PAIGTCKALY…PTSYVEVYLD (62 aa)). The tract at residues 549-616 (PAIGTCKALY…VYLDKNAKGS (68 aa)) is interaction with ARHGAP17, DAAM1, DIAPH1 and DIAPH2. An interaction with DNM2 and WASL region spans residues 552-608 (GTCKALYTFEGQNEGTISVVEGETLSVIEEDKGDGWTRIRRNEDEEGYVPTSYVEVY). The tract at residues 552-609 (GTCKALYTFEGQNEGTISVVEGETLSVIEEDKGDGWTRIRRNEDEEGYVPTSYVEVYL) is interaction with FASLG.

This sequence belongs to the FNBP1 family. As to quaternary structure, homodimerizes, the dimers can polymerize end-to-end to form filamentous structures. Interacts specifically with GTP-bound RND2 and CDC42. Interacts with AKAP9, ARHGAP17, DAAM1, DIAPH1, DIAPH2, DNM1, DNM2, DNM3, FASLG/FASL, microtubules, PDE6G, SNX2 and WASL/N-WASP. May interact with TNKS. Expressed in brain and testis.

Its subcellular location is the cytoplasm. It is found in the cytoskeleton. It localises to the cell cortex. The protein resides in the lysosome. The protein localises to the cytoplasmic vesicle. Its subcellular location is the cell membrane. It is found in the membrane. It localises to the clathrin-coated pit. Required to coordinate membrane tubulation with reorganization of the actin cytoskeleton during the late stage of clathrin-mediated endocytosis. Binds to lipids such as phosphatidylinositol 4,5-bisphosphate and phosphatidylserine and promotes membrane invagination and the formation of tubules. Also enhances actin polymerization via the recruitment of WASL/N-WASP, which in turn activates the Arp2/3 complex. Actin polymerization may promote the fission of membrane tubules to form endocytic vesicles. May act as a link between RND2 signaling and regulation of the actin cytoskeleton. May be required for the lysosomal retention of FASLG/FASL. The sequence is that of Formin-binding protein 1 (Fnbp1) from Mus musculus (Mouse).